The following is a 520-amino-acid chain: Alpha-1B adrenergic receptor (520 aa).

The Extracellular segment spans residues 1-45 (MNPDLDTGHNTSAPAHWGELKNANFTGPNQTSSNSTLPQLDITRA). Residues asparagine 10, asparagine 24, asparagine 29, and asparagine 34 are each glycosylated (N-linked (GlcNAc...) asparagine). Residues 46-70 (ISVGLVLGAFILFAIVGNILVILSV) traverse the membrane as a helical segment. Residues 71–83 (ACNRHLRTPTNYF) lie on the Cytoplasmic side of the membrane. Residues 84 to 105 (IVNLAMADLLLSFTVLPFSAAL) form a helical membrane-spanning segment. Over 106–115 (EVLGYWVLGR) the chain is Extracellular. Residues 116–141 (IFCDIWAAVDVLCCTASILSLCAISI) traverse the membrane as a helical segment. Cysteine 118 and cysteine 195 form a disulfide bridge. Over 142 to 161 (DRYIGVRYSLQYPTLVTRRK) the chain is Cytoplasmic. A helical transmembrane segment spans residues 162 to 184 (AILALLSVWVLSTVISIGPLLGW). Over 185 to 201 (KEPAPNDDKECGVTEEP) the chain is Extracellular. Residues 202–224 (FYALFSSLGSFYIPLAVILVMYC) form a helical membrane-spanning segment. Residues 225 to 295 (RVYIVAKRTT…FSREKKAAKT (71 aa)) are Cytoplasmic-facing. The residue at position 264 (threonine 264) is a Phosphothreonine. The chain crosses the membrane as a helical span at residues 296-319 (LGIVVGMFILCWLPFFIALPLGSL). Over 320 to 326 (FSTLKPP) the chain is Extracellular. Residues 327–351 (DAVFKVVFWLGYFNSCLNPIIYPCS) traverse the membrane as a helical segment. At 352–520 (SKEFKRAFVR…SNMPLAPGQF (169 aa)) the chain is on the cytoplasmic side. Cysteine 365 carries the S-palmitoyl cysteine lipid modification. The Nuclear localization signal motif lies at 368–380 (RGRGRRRRRRRRR). Disordered stretches follow at residues 394 to 432 (GGSLERSQSRKDSLDDSGSCLSGSQRTLPSASPSPGYLG) and 479 to 520 (LTEP…PGQF).

The protein belongs to the G-protein coupled receptor 1 family. Adrenergic receptor subfamily. ADRA1B sub-subfamily. In terms of assembly, homo- and heterooligomer. Heterooligomerizes with ADRA1B homooligomers in cardiac myocytes. Interacts with CAVIN4.

The protein localises to the nucleus membrane. It localises to the cell membrane. The protein resides in the cytoplasm. Its subcellular location is the membrane. It is found in the caveola. Its function is as follows. This alpha-adrenergic receptor mediates its action by association with G proteins that activate a phosphatidylinositol-calcium second messenger system. Its effect is mediated by G(q) and G(11) proteins. Nuclear ADRA1A-ADRA1B heterooligomers regulate phenylephrine (PE)-stimulated ERK signaling in cardiac myocytes. In Homo sapiens (Human), this protein is Alpha-1B adrenergic receptor (ADRA1B).